A 429-amino-acid polypeptide reads, in one-letter code: Adenylosuccinate synthetase (429 aa).

Residues 12 to 18 (GDEGKGK) and 40 to 42 (GHT) each bind GTP. Asp13 serves as the catalytic Proton acceptor. Mg(2+)-binding residues include Asp13 and Gly40. IMP-binding positions include 13 to 16 (DEGK), 38 to 41 (NAGH), Thr128, Arg142, Gln223, Thr238, and Arg302. The Proton donor role is filled by His41. Substrate is bound at residue 298–304 (VNTGRKR). Residues Arg304, 330–332 (KLD), and 412–414 (GVG) each bind GTP.

This sequence belongs to the adenylosuccinate synthetase family. As to quaternary structure, homodimer. Mg(2+) is required as a cofactor.

Its subcellular location is the cytoplasm. The enzyme catalyses IMP + L-aspartate + GTP = N(6)-(1,2-dicarboxyethyl)-AMP + GDP + phosphate + 2 H(+). It participates in purine metabolism; AMP biosynthesis via de novo pathway; AMP from IMP: step 1/2. Its function is as follows. Plays an important role in the de novo pathway of purine nucleotide biosynthesis. Catalyzes the first committed step in the biosynthesis of AMP from IMP. In Corynebacterium glutamicum (strain R), this protein is Adenylosuccinate synthetase.